The primary structure comprises 635 residues: Extracellular metalloproteinase 1 (635 aa).

The first 19 residues, 1-19 (MHGLLLAAGLLSLPLHVLA), serve as a signal peptide directing secretion. A propeptide spanning residues 20 to 246 (HPQPSTSTSL…VHNVVDYVAH (227 aa)) is cleaved from the precursor. N-linked (GlcNAc...) asparagine glycosylation occurs at N287. H430 is a binding site for Zn(2+). E431 is an active-site residue. Position 434 (H434) interacts with Zn(2+). N-linked (GlcNAc...) asparagine glycans are attached at residues N475, N594, and N623.

Belongs to the peptidase M36 family. Zn(2+) is required as a cofactor.

The protein localises to the secreted. Secreted metalloproteinase probably acting as a virulence factor. The protein is Extracellular metalloproteinase 1 (MEP1) of Trichophyton rubrum (Athlete's foot fungus).